The sequence spans 290 residues: Picrinine-N-methytransferase (290 aa).

Positions 71 to 80 (MLDVGCGIGG) are SAM motif I. The short motif at 133-139 (DGTFDLV) is the Vacuolar targeting signal element. Residues 134–142 (GTFDLVFTI) form an SAM motif II region. Residues 161-170 (VAAPGAPIVI) form an SAM motif III region.

Belongs to the class I-like SAM-binding methyltransferase superfamily. gTMT family. Homodimer. As to expression, accumulates in tissues actively synthesizing monoterpenoid indole alkaloids (MIAs) (at protein level). Mainly expressed in young leaves and, to a lower extent, in roots and stems.

Its subcellular location is the vacuole membrane. It carries out the reaction picrinine + S-adenosyl-L-methionine = ervincine + S-adenosyl-L-homocysteine + H(+). It functions in the pathway alkaloid biosynthesis; vindoline biosynthesis. In terms of biological role, S-adenosyl-L-methionine-dependent N-methyltransferase involved in the biosynthesis of biologically active monoterpenoid indole alkaloids (MIAs) natural products including vindoline. Catalyzes the conversion of picrinine to N-methylpicrinine (ervincine). Also accepts, with low efficiency, 21-hydroxycyclolochnericine and norajmaline as substrates. This is Picrinine-N-methytransferase from Rauvolfia serpentina (Serpentine wood).